Reading from the N-terminus, the 270-residue chain is Tryptophan synthase alpha chain (270 aa).

Catalysis depends on proton acceptor residues Glu49 and Asp60.

The protein belongs to the TrpA family. Tetramer of two alpha and two beta chains.

It catalyses the reaction (1S,2R)-1-C-(indol-3-yl)glycerol 3-phosphate + L-serine = D-glyceraldehyde 3-phosphate + L-tryptophan + H2O. The protein operates within amino-acid biosynthesis; L-tryptophan biosynthesis; L-tryptophan from chorismate: step 5/5. Functionally, the alpha subunit is responsible for the aldol cleavage of indoleglycerol phosphate to indole and glyceraldehyde 3-phosphate. This chain is Tryptophan synthase alpha chain, found in Pseudomonas syringae pv. tomato (strain ATCC BAA-871 / DC3000).